The following is a 140-amino-acid chain: Sperm protein associated with the nucleus on the X chromosome N3 (140 aa).

3 stretches are compositionally biased toward polar residues: residues 1-20 (MEQPTSSTNGEKTKSPCKSN), 62-79 (INSNQLENDQSQENSINP), and 131-140 (EGSSQDSGED). Positions 1-140 (MEQPTSSTNG…EGSSQDSGED (140 aa)) are disordered.

The protein belongs to the SPAN-X family.

The chain is Sperm protein associated with the nucleus on the X chromosome N3 (SPANXN3) from Pan troglodytes (Chimpanzee).